The following is a 227-amino-acid chain: Ribonuclease 3 (227 aa).

Positions 4–133 constitute an RNase III domain; that stretch reads FEELEKLLDY…LIAAIYLDSD (130 aa). Glutamate 46 contacts Mg(2+). Aspartate 50 is an active-site residue. Mg(2+) contacts are provided by asparagine 119 and glutamate 122. Residue glutamate 122 is part of the active site. Positions 158–226 constitute a DRBM domain; sequence DPKTALQEWA…ARELLHKLKL (69 aa).

It belongs to the ribonuclease III family. Homodimer. Requires Mg(2+) as cofactor.

The protein resides in the cytoplasm. It catalyses the reaction Endonucleolytic cleavage to 5'-phosphomonoester.. Its function is as follows. Digests double-stranded RNA. Involved in the processing of primary rRNA transcript to yield the immediate precursors to the large and small rRNAs (23S and 16S). Processes some mRNAs, and tRNAs when they are encoded in the rRNA operon. Processes pre-crRNA and tracrRNA of type II CRISPR loci if present in the organism. The protein is Ribonuclease 3 of Rickettsia bellii (strain OSU 85-389).